Reading from the N-terminus, the 320-residue chain is Probable cell division protein WhiA (320 aa).

The H-T-H motif DNA-binding region spans 276–310 (TLKELGEMVESGKVSKSGVNHRLRKIDELAEKLRA).

The protein belongs to the WhiA family.

Functionally, involved in cell division and chromosome segregation. This Halalkalibacterium halodurans (strain ATCC BAA-125 / DSM 18197 / FERM 7344 / JCM 9153 / C-125) (Bacillus halodurans) protein is Probable cell division protein WhiA.